A 168-amino-acid chain; its full sequence is MVEDILAPGLRVVFCGINPGLSSAGTGFPFAHPANRFWKVIYQAGFTDRQLKPQEAQHLLDYRCGVTKLVDRPTVQANEVSKQELHAGGRKLIEKIEDYQPQALAILGKQAYEQGFSQRGAQWGKQTLTIGSTQIWVLPNPSGLSRVSLEKLVEAYRELDQALVVRGL.

It belongs to the uracil-DNA glycosylase (UDG) superfamily. TDG/mug family. Binds DNA as a monomer.

The protein localises to the cytoplasm. The catalysed reaction is Specifically hydrolyzes mismatched double-stranded DNA and polynucleotides, releasing free uracil.. Excises ethenocytosine and uracil, which can arise by alkylation or deamination of cytosine, respectively, from the corresponding mispairs with guanine in ds-DNA. It is capable of hydrolyzing the carbon-nitrogen bond between the sugar-phosphate backbone of the DNA and the mispaired base. The complementary strand guanine functions in substrate recognition. Required for DNA damage lesion repair in stationary-phase cells. The polypeptide is G/U mismatch-specific DNA glycosylase (Escherichia coli (strain SMS-3-5 / SECEC)).